The following is a 424-amino-acid chain: Histidine--tRNA ligase (424 aa).

Belongs to the class-II aminoacyl-tRNA synthetase family. As to quaternary structure, homodimer.

Its subcellular location is the cytoplasm. The catalysed reaction is tRNA(His) + L-histidine + ATP = L-histidyl-tRNA(His) + AMP + diphosphate + H(+). The protein is Histidine--tRNA ligase of Shigella sonnei (strain Ss046).